The chain runs to 146 residues: Hemoglobin subunit beta (146 aa).

Position 1 is an N-acetylvaline (V1). Positions 2-146 constitute a Globin domain; the sequence is HLTGEEKAAV…VATALAHKYH (145 aa). T12 is modified (phosphothreonine). Residue S44 is modified to Phosphoserine. N6-acetyllysine is present on K59. H63 provides a ligand contact to heme b. K82 is subject to N6-acetyllysine. H92 provides a ligand contact to heme b. C93 carries the post-translational modification S-nitrosocysteine. An N6-acetyllysine modification is found at K144.

This sequence belongs to the globin family. Heterotetramer of two alpha chains and two beta chains. In terms of tissue distribution, red blood cells.

Involved in oxygen transport from the lung to the various peripheral tissues. This is Hemoglobin subunit beta (HBB) from Macroderma gigas (Australian ghost bat).